Reading from the N-terminus, the 129-residue chain is Small ribosomal subunit protein uS9 (129 aa).

The disordered stretch occupies residues 98 to 129; the sequence is KAQGFLTRDPRKKERKKYGRKKARKSFQFSKR. A compositionally biased stretch (basic residues) spans 110-129; sequence KERKKYGRKKARKSFQFSKR.

This sequence belongs to the universal ribosomal protein uS9 family.

This chain is Small ribosomal subunit protein uS9, found in Chlamydia trachomatis serovar L2 (strain ATCC VR-902B / DSM 19102 / 434/Bu).